The following is a 360-amino-acid chain: 3-dehydroquinate synthase (360 aa).

NAD(+) is bound by residues 71–76 (DGEQYK), 105–109 (GVVGD), 129–130 (TT), lysine 142, lysine 151, and 169–172 (TLNT). 3 residues coordinate Zn(2+): glutamate 184, histidine 248, and histidine 265.

Belongs to the sugar phosphate cyclases superfamily. Dehydroquinate synthase family. Co(2+) serves as cofactor. Requires Zn(2+) as cofactor. NAD(+) is required as a cofactor.

The protein localises to the cytoplasm. The catalysed reaction is 7-phospho-2-dehydro-3-deoxy-D-arabino-heptonate = 3-dehydroquinate + phosphate. It functions in the pathway metabolic intermediate biosynthesis; chorismate biosynthesis; chorismate from D-erythrose 4-phosphate and phosphoenolpyruvate: step 2/7. Its function is as follows. Catalyzes the conversion of 3-deoxy-D-arabino-heptulosonate 7-phosphate (DAHP) to dehydroquinate (DHQ). In Coxiella burnetii (strain RSA 331 / Henzerling II), this protein is 3-dehydroquinate synthase.